We begin with the raw amino-acid sequence, 157 residues long: 2-C-methyl-D-erythritol 2,4-cyclodiphosphate synthase (157 aa).

A divalent metal cation contacts are provided by D8 and H10. 4-CDP-2-C-methyl-D-erythritol 2-phosphate is bound by residues 8 to 10 (DVH) and 34 to 35 (HS). Residue H42 participates in a divalent metal cation binding. Residues 56–58 (DIG), 132–135 (TTNE), and R142 contribute to the 4-CDP-2-C-methyl-D-erythritol 2-phosphate site.

Belongs to the IspF family. As to quaternary structure, homotrimer. It depends on a divalent metal cation as a cofactor.

The enzyme catalyses 4-CDP-2-C-methyl-D-erythritol 2-phosphate = 2-C-methyl-D-erythritol 2,4-cyclic diphosphate + CMP. It functions in the pathway isoprenoid biosynthesis; isopentenyl diphosphate biosynthesis via DXP pathway; isopentenyl diphosphate from 1-deoxy-D-xylulose 5-phosphate: step 4/6. Involved in the biosynthesis of isopentenyl diphosphate (IPP) and dimethylallyl diphosphate (DMAPP), two major building blocks of isoprenoid compounds. Catalyzes the conversion of 4-diphosphocytidyl-2-C-methyl-D-erythritol 2-phosphate (CDP-ME2P) to 2-C-methyl-D-erythritol 2,4-cyclodiphosphate (ME-CPP) with a corresponding release of cytidine 5-monophosphate (CMP). The chain is 2-C-methyl-D-erythritol 2,4-cyclodiphosphate synthase from Chlorobium phaeovibrioides (strain DSM 265 / 1930) (Prosthecochloris vibrioformis (strain DSM 265)).